Reading from the N-terminus, the 475-residue chain is UDP-N-acetylmuramate--L-alanine ligase (475 aa).

ATP is bound at residue 125 to 131 (GTHGKTT).

This sequence belongs to the MurCDEF family.

The protein localises to the cytoplasm. It catalyses the reaction UDP-N-acetyl-alpha-D-muramate + L-alanine + ATP = UDP-N-acetyl-alpha-D-muramoyl-L-alanine + ADP + phosphate + H(+). Its pathway is cell wall biogenesis; peptidoglycan biosynthesis. Its function is as follows. Cell wall formation. The protein is UDP-N-acetylmuramate--L-alanine ligase of Haemophilus influenzae (strain 86-028NP).